A 108-amino-acid chain; its full sequence is UPF0145 protein THA_1434 (108 aa).

This sequence belongs to the UPF0145 family.

The polypeptide is UPF0145 protein THA_1434 (Thermosipho africanus (strain TCF52B)).